Here is a 549-residue protein sequence, read N- to C-terminus: Oxygen-dependent choline dehydrogenase (549 aa).

Residue 4-33 (DFVIIGSGSAGSAMAYRLSEDGRYSVIVIE) participates in FAD binding. Histidine 465 acts as the Proton acceptor in catalysis.

It belongs to the GMC oxidoreductase family. FAD is required as a cofactor.

The enzyme catalyses choline + A = betaine aldehyde + AH2. The catalysed reaction is betaine aldehyde + NAD(+) + H2O = glycine betaine + NADH + 2 H(+). The protein operates within amine and polyamine biosynthesis; betaine biosynthesis via choline pathway; betaine aldehyde from choline (cytochrome c reductase route): step 1/1. Its function is as follows. Involved in the biosynthesis of the osmoprotectant glycine betaine. Catalyzes the oxidation of choline to betaine aldehyde and betaine aldehyde to glycine betaine at the same rate. The sequence is that of Oxygen-dependent choline dehydrogenase from Brucella melitensis biotype 1 (strain ATCC 23456 / CCUG 17765 / NCTC 10094 / 16M).